The primary structure comprises 497 residues: O-acetyltransferase PaAT-1 (497 aa).

N35 carries an N-linked (GlcNAc...) asparagine glycan. The next 9 helical transmembrane spans lie at 69–89, 107–127, 157–177, 241–261, 278–298, 329–349, 375–395, 406–426, and 443–463; these read GISA…GWHI, LLIS…YSLS, LFVP…LNWY, LWTL…LMAF, VLFQ…GMLI, AIGV…HLAF, PIAA…QVLF, ISFA…HALG, and VAIS…ADFV.

The protein belongs to the acyltransferase 3 family.

It localises to the membrane. It participates in mycotoxin biosynthesis. Functionally, O-acetyltransferase; part of the 2 gene clusters that mediate the biosynthesis of fusicoccins, diterpene glucosides that display phytohormone-like activity and function as potent activators of plasma membrane H(+)-ATPases in plants by modifying 14-3-3 proteins and cause the plant disease constriction canker. The first step in the pathway is performed by the fusicoccadiene synthase PaFS that possesses both prenyl transferase and terpene cyclase activity, converting isopentenyl diphosphate and dimethylallyl diphosphate into geranylgeranyl diphosphate (GGDP) and successively converting GGDP into fusicocca-2,10(14)-diene, a precursor for fusicoccin H. The second step is the oxidation at the C-8 position by the cytochrome P450 monooxygenase PaP450-2 to yield fusicocca-2,10(14)-diene-8-beta-ol. The cytochrome P450 monooxygenase PaP450-1 then catalyzes the hydroxylation at the C-16 position to produce fusicocca-2,10(14)-diene-8-beta,16-diol. The dioxygenase fc-dox then catalyzes the 16-oxydation of fusicocca-2,10(14)-diene-8-beta,16-diol to yield an aldehyde (8-beta-hydroxyfusicocca-1,10(14)-dien-16-al). The short-chain dehydrogenase/reductase fc-sdr catalyzes the reduction of the aldehyde to yield fusicocca-1,10(14)-diene-8-beta,16-diol. The next step is the hydroxylation at C-9 performed by the cytochrome P450 monooxygenase PaP450-3 that leads to fusicoccin H aglycon which is glycosylated to fusicoccin H by the O-glycosyltransferase PaGT. Hydroxylation at C-12 by the cytochrome P450 monooxygenase PaP450-4 leads then to the production of fusicoccin Q and is followed by methylation by the O-methyltransferase PaMT to yield fusicoccin P. Fusicoccin P is further converted to fusicoccin J via prenylation by the O-glucose prenyltransferase PaPT. Cytochrome P450 monooxygenase PaP450-5 then performs hydroxylation at C-19 to yield dideacetyl-fusicoccin A which is acetylated to 3'-O-deacetyl-fusicoccin A by the O-acetyltransferase PaAT-2. Finally, a another acetylation by the O-acetyltransferase PaAT-1 yields fusicoccin A. The protein is O-acetyltransferase PaAT-1 of Phomopsis amygdali (Fusicoccum amygdali).